The primary structure comprises 330 residues: Aspartate--ammonia ligase (330 aa).

The protein belongs to the class-II aminoacyl-tRNA synthetase family. AsnA subfamily.

It is found in the cytoplasm. It carries out the reaction L-aspartate + NH4(+) + ATP = L-asparagine + AMP + diphosphate + H(+). Its pathway is amino-acid biosynthesis; L-asparagine biosynthesis; L-asparagine from L-aspartate (ammonia route): step 1/1. The sequence is that of Aspartate--ammonia ligase from Streptococcus pyogenes serotype M5 (strain Manfredo).